Here is a 255-residue protein sequence, read N- to C-terminus: MRATAALRVELAADGRNVVRELRSQPPITLIPRRGVASAAGGPAVVHLVGSATSPMGGDRVDLRVHVGAGAALRLSGTAATVALPGQRTGHSRATVRIEVEAGGTVEYLPEATVVSGRADHRADMRVELAEHARARCREVLVLGRYGERPGVLTTSTHVVRAGTPLLRQRLDIGEQRLAASAGYLAGARVLAAETVVWDHDPAAPAGGQWWSLAPLSGGGALATSVAADAVTAQRGLAEALGHHPDAEALTRELW.

It belongs to the UreD family. In terms of assembly, ureD, UreF and UreG form a complex that acts as a GTP-hydrolysis-dependent molecular chaperone, activating the urease apoprotein by helping to assemble the nickel containing metallocenter of UreC. The UreE protein probably delivers the nickel.

The protein resides in the cytoplasm. Its function is as follows. Required for maturation of urease via the functional incorporation of the urease nickel metallocenter. This is Urease accessory protein UreD 1 from Saccharopolyspora erythraea (strain ATCC 11635 / DSM 40517 / JCM 4748 / NBRC 13426 / NCIMB 8594 / NRRL 2338).